The primary structure comprises 612 residues: UvrABC system protein C (612 aa).

Positions 20 to 98 (THSGVYRMLD…IKQHRPKYNI (79 aa)) constitute a GIY-YIG domain. Residues 208-243 (SSVLEEISAKMYQASEDMEYEKAQVYRDQLVVLRKL) enclose the UVR domain.

Belongs to the UvrC family. As to quaternary structure, interacts with UvrB in an incision complex.

The protein localises to the cytoplasm. Its function is as follows. The UvrABC repair system catalyzes the recognition and processing of DNA lesions. UvrC both incises the 5' and 3' sides of the lesion. The N-terminal half is responsible for the 3' incision and the C-terminal half is responsible for the 5' incision. The chain is UvrABC system protein C from Francisella tularensis subsp. holarctica (strain FTNF002-00 / FTA).